Consider the following 349-residue polypeptide: uncharacterized protein (349 aa).

Residues 1-16 (MLFKISFLALIASALA) form the signal peptide. Topologically, residues 17–326 (MSINSPTNGD…SSSSSSSAAS (310 aa)) are lumenal. Disordered regions lie at residues 115–190 (ASSS…SSYR) and 243–322 (TNGT…SSSS). Composition is skewed to low complexity over residues 116–176 (SSSS…SSRT), 243–278 (TNGT…TASG), and 289–322 (STND…SSSS). A helical transmembrane segment spans residues 327-347 (LVSQPVGISAVIAFFAVALSL). The Cytoplasmic segment spans residues 348–349 (TL).

It localises to the endoplasmic reticulum membrane. This is an uncharacterized protein from Schizosaccharomyces pombe (strain 972 / ATCC 24843) (Fission yeast).